Consider the following 125-residue polypeptide: Glycine cleavage system H protein (125 aa).

The region spanning 22 to 104 (SYVIGITDFA…YDTGWILKLE (83 aa)) is the Lipoyl-binding domain. Lys63 is subject to N6-lipoyllysine.

Belongs to the GcvH family. As to quaternary structure, the glycine cleavage system is composed of four proteins: P, T, L and H. (R)-lipoate serves as cofactor.

Functionally, the glycine cleavage system catalyzes the degradation of glycine. The H protein shuttles the methylamine group of glycine from the P protein to the T protein. Is also involved in protein lipoylation via its role as an octanoyl/lipoyl carrier protein intermediate. The protein is Glycine cleavage system H protein of Listeria monocytogenes serotype 4b (strain CLIP80459).